An 887-amino-acid polypeptide reads, in one-letter code: Pyruvate dehydrogenase E1 component (887 aa).

3 residues coordinate Mg(2+): aspartate 231, asparagine 261, and glutamine 263. Lysine 716 carries the post-translational modification N6-acetyllysine.

In terms of assembly, homodimer. Part of the PDH complex, consisting of multiple copies of pyruvate dehydrogenase (E1), dihydrolipoamide acetyltransferase (E2) and lipoamide dehydrogenase (E3). Requires Mg(2+) as cofactor. Thiamine diphosphate is required as a cofactor.

The catalysed reaction is N(6)-[(R)-lipoyl]-L-lysyl-[protein] + pyruvate + H(+) = N(6)-[(R)-S(8)-acetyldihydrolipoyl]-L-lysyl-[protein] + CO2. Its function is as follows. Component of the pyruvate dehydrogenase (PDH) complex, that catalyzes the overall conversion of pyruvate to acetyl-CoA and CO(2). The protein is Pyruvate dehydrogenase E1 component (aceE) of Escherichia coli O157:H7.